The primary structure comprises 49 residues: Large ribosomal subunit protein eL40 (49 aa).

The protein belongs to the eukaryotic ribosomal protein eL40 family.

The protein is Large ribosomal subunit protein eL40 of Methanosarcina acetivorans (strain ATCC 35395 / DSM 2834 / JCM 12185 / C2A).